Consider the following 156-residue polypeptide: MTWMVKLLRQMISMQSQYGAALGATCLLHYLTTSLSIRFFFHDLTVRKHEVMPLGMDYYYLYAIGKDPSHPEIRGSVRKILEKYKTKADKANCALALEAISEHARSVYEYFGFKTYLVFQFGVGEVNSKGEPDPQGKGFTAYLMLYHKDADTIFHA.

The helical transmembrane segment at 20 to 42 threads the bilayer; the sequence is AALGATCLLHYLTTSLSIRFFFH.

It is found in the membrane. The chain is Putative increased recombination centers protein 11 (IRC11) from Saccharomyces cerevisiae (strain ATCC 204508 / S288c) (Baker's yeast).